The primary structure comprises 459 residues: MNGKIVQIIGPVIDVEFKGADLPKIYDALKVDELDLTLEVQQQVGDNVVRAIAMGSSDGLKRGMAVSNTGEAISVPVGKPTLGRIFDVLGNPIDNAGPVESEEKMTIHRPAPAFDELAASQELLETGVKVIDLICPFAKGGKVGLFGGAGVGKTVNMMELIRNIAIEHSGYSVFAGVGERTREGNDFYYEMEESGVLDKVALVYGQMNEPPGNRLRVALTGLTMAEYFRDEGRDILFFVDNIYRYTLAGTEVSALLGRMPSAVGYQPTLSQEMGQIQERITSTKTGSITSIQAVYVPADDLTDPAPATTFAHLDATVVLNRSIAETGIYPAIDPLDSTSRQLDPLVVGSEHYDTARGVQETLQRYKELKDIIAILGMDELSEEDRSLVARARKMQRFFSQPYFVAKVFTGEDGRYVPLKETLRGFKMIISGELDDIPEQAFMYAGDIDEVLEKAKKYKD.

Residue 147–154 participates in ATP binding; sequence GGAGVGKT.

Belongs to the ATPase alpha/beta chains family. As to quaternary structure, F-type ATPases have 2 components, CF(1) - the catalytic core - and CF(0) - the membrane proton channel. CF(1) has five subunits: alpha(3), beta(3), gamma(1), delta(1), epsilon(1). CF(0) has three main subunits: a(1), b(2) and c(9-12). The alpha and beta chains form an alternating ring which encloses part of the gamma chain. CF(1) is attached to CF(0) by a central stalk formed by the gamma and epsilon chains, while a peripheral stalk is formed by the delta and b chains.

Its subcellular location is the cell inner membrane. The enzyme catalyses ATP + H2O + 4 H(+)(in) = ADP + phosphate + 5 H(+)(out). Functionally, produces ATP from ADP in the presence of a proton gradient across the membrane. The catalytic sites are hosted primarily by the beta subunits. This chain is ATP synthase subunit beta, found in Hydrogenovibrio crunogenus (strain DSM 25203 / XCL-2) (Thiomicrospira crunogena).